The sequence spans 262 residues: Acyl-[acyl-carrier-protein]--UDP-N-acetylglucosamine O-acyltransferase (262 aa).

The protein belongs to the transferase hexapeptide repeat family. LpxA subfamily. Homotrimer.

The protein resides in the cytoplasm. The enzyme catalyses a (3R)-hydroxyacyl-[ACP] + UDP-N-acetyl-alpha-D-glucosamine = a UDP-3-O-[(3R)-3-hydroxyacyl]-N-acetyl-alpha-D-glucosamine + holo-[ACP]. It participates in glycolipid biosynthesis; lipid IV(A) biosynthesis; lipid IV(A) from (3R)-3-hydroxytetradecanoyl-[acyl-carrier-protein] and UDP-N-acetyl-alpha-D-glucosamine: step 1/6. Involved in the biosynthesis of lipid A, a phosphorylated glycolipid that anchors the lipopolysaccharide to the outer membrane of the cell. This Aliivibrio salmonicida (strain LFI1238) (Vibrio salmonicida (strain LFI1238)) protein is Acyl-[acyl-carrier-protein]--UDP-N-acetylglucosamine O-acyltransferase.